A 235-amino-acid chain; its full sequence is MNELVYGLSALGISLNSVQLGQFETYYQELVDYNSRINLTAITEYKDVQIKHFLDSVSLVLAGIKGDEKLLDVGSGAGFPGLPLKILFPAIQLGLLEATQKKARFLSEITVKLGLSGVEIISQRAEDTAQNPLYRQKYSLVTSRAVADMATLAELTLPFCAVGGRVIAPKKGDIEEEMDRAATAVKKMGGRVFKVIKVELPGLEDGRKLVLLEKISNTPALYPRRAGIPAKTPLI.

Residues Gly-74, Phe-79, 97–99 (EAT), 125–126 (AE), and Arg-144 each bind S-adenosyl-L-methionine.

This sequence belongs to the methyltransferase superfamily. RNA methyltransferase RsmG family.

The protein resides in the cytoplasm. Specifically methylates the N7 position of a guanine in 16S rRNA. The chain is Ribosomal RNA small subunit methyltransferase G from Dehalococcoides mccartyi (strain CBDB1).